We begin with the raw amino-acid sequence, 840 residues long: V-type proton ATPase subunit a, vacuolar isoform (840 aa).

Residue Ala-2 is modified to N-acetylalanine. Over 2-404 (AEKEEAIFRS…DCYGIAQYRE (403 aa)) the chain is Cytoplasmic. Positions 117-145 (LEERLIQMEDATDQIEVQKNDLEQYRFIL) form a coiled coil. A helical transmembrane segment spans residues 405–423 (INAGLPTIVTFPFMFAIMF). The Vacuolar segment spans residues 424 to 425 (GD). The helical transmembrane segment at 426-442 (MGHGFLMTLAALSLVLN) threads the bilayer. The Cytoplasmic segment spans residues 443-456 (EKKINKMKRGEIFD). The chain crosses the membrane as a helical span at residues 457 to 486 (MAFTGRYIILLMGVFSMYTGFLYNDIFSKT). The Vacuolar segment spans residues 487-534 (MTIFKSGWKWPDHWKKGESITATSVGTYPIGLDWAWHGTENALLFSNS). Residues 535-554 (YKMKLSILMGFIHMTYSYFF) traverse the membrane as a helical segment. The Cytoplasmic segment spans residues 555–572 (SLANHLYFNSMIDIIGNF). The helical transmembrane segment at 573 to 593 (IPGLLFMQGIFGYLSVCIVYK) threads the bilayer. Residues 594-636 (WAVDWVKDGKPAPGLLNMLINMFLSPGTIDDELYPHQAKVQVF) are Vacuolar-facing. The chain crosses the membrane as a helical span at residues 637 to 656 (LLLMALVCIPWLLLVKPLHF). Residues 657–719 (KFTHKKKSHE…DIMIHQVIHT (63 aa)) are Cytoplasmic-facing. A helical membrane pass occupies residues 720–744 (IEFCLNCVSHTASYLRLWALSLAHA). Topologically, residues 745–765 (QLSSVLWTMTIQIAFGFRGFV) are vacuolar. Residues 766-804 (GVFMTVALFAMWFALTCAVLVLMEGTSAMLHSLRLHWVE) form a helical membrane-spanning segment. Topologically, residues 805 to 840 (SMSKFFVGEGLPYEPFAFEYKDMEVAVASASSSASS) are cytoplasmic.

Belongs to the V-ATPase 116 kDa subunit family. V-ATPase is a heteromultimeric enzyme composed of a peripheral catalytic V1 complex (components A to H) attached to an integral membrane V0 proton pore complex (components: a, c, c', c'', d, e, f and VOA1). In terms of processing, glycosylated.

The protein localises to the vacuole membrane. Subunit of the V0 complex of vacuolar(H+)-ATPase (V-ATPase), a multisubunit enzyme composed of a peripheral complex (V1) that hydrolyzes ATP and a membrane integral complex (V0) that translocates protons. V-ATPase is responsible for acidifying and maintaining the pH of intracellular compartments. Is present only in vacuolar V-ATPase complexes; enzymes containing this subunit have a 4-fold higher ratio of proton transport to ATP hydrolysis than complexes containing the Golgi/endosomal isoform and undergo reversible dissociation of V1 and V0 in response to glucose depletion. This Saccharomyces cerevisiae (strain ATCC 204508 / S288c) (Baker's yeast) protein is V-type proton ATPase subunit a, vacuolar isoform.